Consider the following 86-residue polypeptide: High affinity immunoglobulin epsilon receptor subunit gamma (86 aa).

The signal sequence occupies residues 1-18 (MYPAVVLLLLLLVEQAAA). At 19–23 (LGEPQ) the chain is on the extracellular side. Residues 24 to 44 (LCYILDAILFLYGIILTLLYC) traverse the membrane as a helical segment. Residues 45-86 (RLKIQVRKATVASYEKPDGIYTGLSTRNQETYETLKHEKPPQ) are Cytoplasmic-facing. Positions 54 to 82 (TVASYEKPDGIYTGLSTRNQETYETLKHE) constitute an ITAM domain. At Y65 the chain carries Phosphotyrosine. S69 is modified (phosphoserine). Y76 is modified (phosphotyrosine). T78 carries the post-translational modification Phosphothreonine.

Belongs to the CD3Z/FCER1G family. As to quaternary structure, igE Fc receptor is a tetramer of an alpha chain, a beta chain, and two disulfide linked gamma chains. Associates with FCGR1A; forms a functional signaling complex. The signaling subunit of immunoglobulin gamma (IgG) Fc receptor complex. As a homodimer or a heterodimer of CD247 and FCER1G, associates with the ligand binding subunit FCGR3A to form a functional receptor complex. Associates with CLEC6A. Interacts with CLEC4E. Interacts (via ITAM domain) with SYK (via SH2 domains); activates SYK, enabling integrin-mediated activation of neutrophils and macrophages. Interacts with CSF2RB and recruits SYK in response to IL3 stimulation; this interaction is direct. Interacts with CD300LH; the interaction may be indirect. Interacts with CD300LD. Interacts with TARM1.

The protein resides in the cell membrane. Functionally, adapter protein containing an immunoreceptor tyrosine-based activation motif (ITAM) that transduces activation signals from various immunoreceptors. As a component of the high-affinity immunoglobulin E (IgE) receptor, mediates allergic inflammatory signaling in mast cells. As a constitutive component of interleukin-3 receptor complex, selectively mediates interleukin 4/IL4 production by basophils priming T-cells toward effector T-helper 2 subset. Associates with pattern recognition receptors CLEC4D and CLEC4E to form a functional signaling complex in myeloid cells. Binding of mycobacterial trehalose 6,6'-dimycolate (TDM) to this receptor complex leads to phosphorylation of ITAM, triggering activation of SYK, CARD9 and NF-kappa-B, consequently driving maturation of antigen-presenting cells and shaping antigen-specific priming of T-cells toward effector T-helper 1 and T-helper 17 cell subtypes. May function cooperatively with other activating receptors. Functionally linked to integrin beta-2/ITGB2-mediated neutrophil activation. Also involved in integrin alpha-2/ITGA2-mediated platelet activation. This chain is High affinity immunoglobulin epsilon receptor subunit gamma (FCER1G), found in Cavia porcellus (Guinea pig).